The primary structure comprises 141 residues: Guanyl-specific ribonuclease Sa3 (141 aa).

The or 43 signal peptide spans 1 to 36 (MRIPPRLVALAGAAAVAATLIAGPVAAAAPASHAVA). An intrachain disulfide couples C52 to C141. E99 (proton acceptor) is an active-site residue. The Proton donor role is filled by H130.

This sequence belongs to the ribonuclease N1/T1 family.

The protein localises to the secreted. It catalyses the reaction [RNA] containing guanosine + H2O = an [RNA fragment]-3'-guanosine-3'-phosphate + a 5'-hydroxy-ribonucleotide-3'-[RNA fragment].. The chain is Guanyl-specific ribonuclease Sa3 (rnaSA3) from Kitasatospora aureofaciens (Streptomyces aureofaciens).